The chain runs to 474 residues: Glutathione synthetase (474 aa).

Ala-2 is modified (N-acetylalanine). Residue Arg-125 coordinates substrate. Glu-144 provides a ligand contact to ATP. Mg(2+) contacts are provided by Glu-144 and Asn-146. Substrate-binding positions include 148–151 (ISAS), 214–216 (ERN), Gln-220, and 267–270 (RDGY). ATP is bound by residues Lys-305, 364 to 373 (KPQREGGGNN), Tyr-375, and 398 to 401 (MEKI). Residue Glu-368 participates in Mg(2+) binding. Ser-415 carries the phosphoserine modification. An ATP-binding site is contributed by Glu-425. Substrate is bound at residue Arg-450. The ATP site is built by Lys-452 and Asp-458. Substrate is bound at residue 461–462 (VA).

Belongs to the eukaryotic GSH synthase family. Homodimer. Mg(2+) is required as a cofactor.

The enzyme catalyses gamma-L-glutamyl-L-cysteine + glycine + ATP = glutathione + ADP + phosphate + H(+). It catalyses the reaction gamma-L-glutamyl-(2S)-2-aminobutanoate + glycine + ATP = ophthalmate + ADP + phosphate + H(+). Its pathway is sulfur metabolism; glutathione biosynthesis; glutathione from L-cysteine and L-glutamate: step 2/2. Functionally, catalyzes the production of glutathione from gamma-glutamylcysteine and glycine in an ATP-dependent manner. Glutathione (gamma-glutamylcysteinylglycine, GSH) is the most abundant intracellular thiol in living aerobic cells and is required for numerous processes including the protection of cells against oxidative damage, amino acid transport, the detoxification of foreign compounds, the maintenance of protein sulfhydryl groups in a reduced state and acts as a cofactor for a number of enzymes. Participates in ophthalmate biosynthesis in hepatocytes. The polypeptide is Glutathione synthetase (Mus musculus (Mouse)).